Here is a 330-residue protein sequence, read N- to C-terminus: AA9 family lytic polysaccharide monooxygenase E (330 aa).

The N-terminal stretch at 1–20 (MRSTLVTGLIAGLLSQQAAA) is a signal peptide. Positions 21 and 99 each coordinate Cu(2+). Cysteine 58 and cysteine 193 are disulfide-bonded. O2 contacts are provided by histidine 179 and glutamine 188. Tyrosine 190 contributes to the Cu(2+) binding site. The CBM1 domain maps to 293-330 (CSVAKYQQCGGTGYTGCTSCASGSTCSAVSPPYYSQCV).

This sequence belongs to the polysaccharide monooxygenase AA9 family. The cofactor is Cu(2+).

It localises to the secreted. It carries out the reaction [(1-&gt;4)-beta-D-glucosyl]n+m + reduced acceptor + O2 = 4-dehydro-beta-D-glucosyl-[(1-&gt;4)-beta-D-glucosyl]n-1 + [(1-&gt;4)-beta-D-glucosyl]m + acceptor + H2O.. Functionally, lytic polysaccharide monooxygenase (LPMO) that depolymerizes crystalline and amorphous polysaccharides via the oxidation of scissile alpha- or beta-(1-4)-glycosidic bonds, yielding exclusively C1 oxidation products. Catalysis by LPMOs requires the reduction of the active-site copper from Cu(II) to Cu(I) by a reducing agent and H(2)O(2) or O(2) as a cosubstrate. This chain is AA9 family lytic polysaccharide monooxygenase E (gh61-5), found in Neurospora crassa (strain ATCC 24698 / 74-OR23-1A / CBS 708.71 / DSM 1257 / FGSC 987).